An 811-amino-acid chain; its full sequence is TLR4 interactor with leucine rich repeats (811 aa).

The N-terminal stretch at 1–25 (MEAARALRLLLVVCGCLALPPLAEP) is a signal peptide. One can recognise an LRRNT domain in the interval 26 to 57 (VCPERCDCQHPQHLLCTNRGLRVVPKTSSLPS). At 26–696 (VCPERCDCQH…AGSRGGVDYQ (671 aa)) the chain is on the extracellular side. 12 LRR repeats span residues 61–81 (VLTY…DFHR), 84–105 (QLRR…TFEK), 108–129 (RLEE…TLAP), 132–153 (KLRI…SFEG), 156–177 (SLVK…VFAP), 180–201 (NLLY…AFAQ), 204–223 (KLRF…RHAA), 230–251 (SLSS…IFQH), 254–275 (RLGL…AFWG), 278–299 (ALRE…LLEP), 302–323 (SLEA…TFGH), and 326–347 (RLRE…IFAA). Asparagine 73 carries N-linked (GlcNAc...) asparagine glycosylation. Asparagine 209 carries N-linked (GlcNAc...) asparagine glycosylation. An LRRCT domain is found at 359-416 (NGWTCDCRLRGLKRWMGDWHSQGRLLTVFVQCRHPPALRGKYLDYLDDQQLQNGSCAD). The interval 484–549 (LSRRGPGLQQ…PSPAGDPWQR (66 aa)) is disordered. 2 stretches are compositionally biased toward low complexity: residues 492–508 (QQPS…APQS) and 530–544 (PTPT…SPAG). A glycan (N-linked (GlcNAc...) asparagine) is linked at asparagine 589. Residues 697-717 (LLTLALLTVNALLVLLALAAW) form a helical membrane-spanning segment. Residues 718 to 811 (ASRWLRRKLR…EDRLLQRFAD (94 aa)) lie on the Cytoplasmic side of the membrane. The residue at position 798 (serine 798) is a Phosphoserine.

As to quaternary structure, belongs to the lipopolysaccharide (LPS) receptor, a multi-protein complex containing at least CD14, MD-2 and TLR4. Interacts with TLR4; this interaction is greatly enhanced by LPS stimulation. Interacts with LPS. N-glycolysaled. As to expression, highly expressed in the brain, ovary, small intestine and spleen.

It localises to the membrane. Functionally, component of the TLR4 signaling complex. Mediates the innate immune response to bacterial lipopolysaccharide (LPS) leading to cytokine secretion. The chain is TLR4 interactor with leucine rich repeats (TRIL) from Homo sapiens (Human).